Consider the following 241-residue polypeptide: Small ribosomal subunit protein uS2 (241 aa).

It belongs to the universal ribosomal protein uS2 family.

This chain is Small ribosomal subunit protein uS2, found in Pectobacterium carotovorum subsp. carotovorum (strain PC1).